The following is a 983-amino-acid chain: MTAGSTSPRPSARSASGRPKRGALLPTVIAVVVLIALFVGFTQVYTNILWFEQLGYLRVFITRNLAVIGLFVAAALIVAALMFLSLWLAHRHRPRGGEVTDTMRKYQQALDPVRKVVMVAVPLIFGLFAASTVATQWQTVMLFFNQEPFGQTDPQFSMDLGFYVFTLPFLRLLIGFLVTALLLAGVAGLLMHYVYGGIRIHERGITTTRAARVHLGSIVAAFLALQAVNFWLDRYSTLISSSGKWTGAMYTDVNAVIPTKGILAVAALLVAVLFVVAGFIGRWKLPLIGAAMLVVVAVVAGGLYPWAIQRFQVTPTEQALEKEFIQRNITMTRQAYGLDDTQVTPYDATTETEKGALRQDTETTSNIRLLDPNVVSSAFAQLQQFRPYYQFPEMLNVDRYDIDGQSQDTVIATRELNPDQIQGWYNQSVVYTHGYGVVAAYGSRVQSDGKPQFMQAGIPSKGEISDDYEPRIYFGEKSPNYSIVGGAAEDAPLELDRPQTNEGDAEDAKTTFTGNGGPNVGNWFNKLAYSIKFQSTDMLLSDAVRPESQILYDRNPRERVEKVAPYLTVDGKPYPAIVDNKVVWIVDAYTTAASYPYSSPSVLQDATKDTQTAQGTTAALPNERVNYIRNSVKATVNAYDGSVELYAWDDQDPVLKSWQNVFPSTVKPYSEMSADLMAHVRYPEDMFKVQRELLNRYHVTDANSFYANDDVWSVPNDPTQQNRNVSQPPYYLSMRMPGEKEANFSLTSSFIPQQNESGNTRNVMYGYLSANADAGTGKDGVKSENYGKLRLLELPRSSVVPGPGQAQNLFNSDTDVSQELNLLRQGASEVINGNLLTLPAGGGMLYVQPVYVQSSGDAAYPTLRRVLVGFGEKVGFAPTLDGALDEVFGGNSGAKTDTGAGVSEKAAEAAQGGKGKDSTPSPSPSGTPVPRSSSLQEALDTANKAMQDSDKAMKDGDWTKYGEAQDRLKRAIDDAMAQDGATK.

7 helical membrane-spanning segments follow: residues 22–42, 67–87, 116–136, 172–192, 213–233, 261–281, and 288–308; these read GALLPTVIAVVVLIALFVGFT, VIGLFVAAALIVAALMFLSLW, VVMVAVPLIFGLFAASTVATQ, LLIGFLVTALLLAGVAGLLMH, VHLGSIVAAFLALQAVNFWLD, GILAVAALLVAVLFVVAGFIG, and IGAAMLVVVAVVAGGLYPWAI. The tract at residues 893–959 is disordered; it reads GAKTDTGAGV…DKAMKDGDWT (67 aa). Basic and acidic residues predominate over residues 947 to 959; that stretch reads QDSDKAMKDGDWT.

This sequence belongs to the UPF0182 family.

It is found in the cell membrane. The sequence is that of UPF0182 protein KRH_08700 from Kocuria rhizophila (strain ATCC 9341 / DSM 348 / NBRC 103217 / DC2201).